The following is a 522-amino-acid chain: tRNA-2-methylthio-N(6)-dimethylallyladenosine synthase (522 aa).

The region spanning 24 to 140 is the MTTase N-terminal domain; that stretch reads RTYEVKTYGC…LPTLLQRAEH (117 aa). Cys-33, Cys-69, Cys-103, Cys-177, Cys-181, and Cys-184 together coordinate [4Fe-4S] cluster. Residues 163–399 enclose the Radical SAM core domain; it reads RESAYAGWVS…MVVQEQVCEE (237 aa). Residues 402–473 enclose the TRAM domain; that stretch reads QKLIGTTVEL…PFFLIADSGV (72 aa).

It belongs to the methylthiotransferase family. MiaB subfamily. Monomer. The cofactor is [4Fe-4S] cluster.

It is found in the cytoplasm. It catalyses the reaction N(6)-dimethylallyladenosine(37) in tRNA + (sulfur carrier)-SH + AH2 + 2 S-adenosyl-L-methionine = 2-methylsulfanyl-N(6)-dimethylallyladenosine(37) in tRNA + (sulfur carrier)-H + 5'-deoxyadenosine + L-methionine + A + S-adenosyl-L-homocysteine + 2 H(+). Catalyzes the methylthiolation of N6-(dimethylallyl)adenosine (i(6)A), leading to the formation of 2-methylthio-N6-(dimethylallyl)adenosine (ms(2)i(6)A) at position 37 in tRNAs that read codons beginning with uridine. This Corynebacterium glutamicum (strain ATCC 13032 / DSM 20300 / JCM 1318 / BCRC 11384 / CCUG 27702 / LMG 3730 / NBRC 12168 / NCIMB 10025 / NRRL B-2784 / 534) protein is tRNA-2-methylthio-N(6)-dimethylallyladenosine synthase.